Here is a 1302-residue protein sequence, read N- to C-terminus: MDITESEFTIFEVTPDPNELNNKRIKEIKGGKVNIKELFRYAGVFEIILLIIGIIGSIGVGCLNPLLMILTGDVVDTFVNGENFSKEGGSIKITTEEMNYEIMNSISDTINKLVLKMLYFAIGNMVAGFLQTICFFVLSEYQGIKIRSLYFKALLRQDPGWFDCHKTGELTSKIINDIQKIQDGMSLKFGRLFQTFSSFITGYLIGFIKCWDLTLVVLCMFPFIMVSMMGLGMSAGIFTMKSHKPFSEACSIAEQTIGNIRTVHSLTQERSFCESYNTKIMETDKYNIKKSIGIGTGLGCMMFFIMSSNALGSWYGNFVVRGKGGSDNVKAGTVLTVFMSVLLATQSLSQISTPINILNSAKVAAFNVYQTIDRIPDIDCQSIGGECPTECNGNIRFEDVQFVYPTRLSHHVLKGLDLEIKKGQTIALVGASGCGKSTTIQLIQRNYDPNGGRVTLDGKDIRELNIKWLRNQIGLVGQEPVLFAGTIRENIMLGAKEGATPSEEEMIECAKMANAHDFISKLPEGYDTIIGEKGALLSGGQKQRIAIARALIRNPSILLLDEATSALDTQSEKIVQEALEKASKGRTTIIVAHRLTTVRNADKICVFHQGEIIEQGKHQELMDLKGTYYGLVKRQSMEEEVDQETVENDLKKFREQEDKEVENISLEQTNLHNENSIVKQIKQEYKEEQKKLKHSNRFVLFRVIWNNYKHEYIFCTLGLIGGIGAGAAFPFYSLNFVDLIRVLMKLHPGINLTDEQANSILRSCMIIICIGIITMISFFCYVGLFMAAGEKMIGRIRRRFYYSIMHQNVSWFDRRENMVGAVTTKLTSDPTSLQGISAERVGDIIEIMSTVGFGFGIGLYFSWKLSLCILAVFPIISFFMFINGQLNSKNAAPAKAAYEQCGVTLVEVVEAMKTVQSLGKEDYFSQKYNNDLQIPKRGIIKWGPLLSITNAITNLLTFSINAYGYYLGICFMKKTINYQQDVPNFVDEIIDTFGDIQKALMTINSATTSFAQIGNVLPDVGKAVGAAKSIYNIIDRKPSIDCYSEEGETFNDVKGEIEFKNIHFRYPTRADNEVLKGISFKAEQGKTIALVGASGCGKSTTIQLIERFYDPTSGEVLLDGHNIKDLNIHFLRNQIGLVGQEPVLFAESVIDNIKRGVPEGVEVSNEQIYAAAKMANAHDFISAMPEGYNTMVGDRGSQLSGGQKQRIAIARALIRNPKVLLLDEATSALDSESEKIVQDALDKASKGRTTIVIAHRLSTIQNADKIYVIMRGKIVEQGKHQELIDLKGFYYTLAMQQFGTVN.

A helical membrane pass occupies residues 43 to 63; the sequence is GVFEIILLIIGIIGSIGVGCL. One can recognise an ABC transmembrane type-1 1 domain in the interval 51 to 360; it reads IIGIIGSIGV…ISTPINILNS (310 aa). Residue Asn83 is glycosylated (N-linked (GlcNAc...) asparagine). Transmembrane regions (helical) follow at residues 118–138, 192–212, 213–233, 292–312, and 331–351; these read LYFAIGNMVAGFLQTICFFVL, LFQTFSSFITGYLIGFIKCWD, LTLVVLCMFPFIMVSMMGLGM, IGIGTGLGCMMFFIMSSNALG, and AGTVLTVFMSVLLATQSLSQI. The ABC transporter 1 domain occupies 395 to 634; the sequence is IRFEDVQFVY…KGTYYGLVKR (240 aa). 430-437 lines the ATP pocket; the sequence is GASGCGKS. N-linked (GlcNAc...) asparagine glycosylation occurs at Asn663. A helical membrane pass occupies residues 712-732; it reads YIFCTLGLIGGIGAGAAFPFY. Residues 713-1022 enclose the ABC transmembrane type-1 2 domain; sequence IFCTLGLIGG…IGNVLPDVGK (310 aa). Asn751 carries an N-linked (GlcNAc...) asparagine glycan. The helical transmembrane segment at 765 to 785 threads the bilayer; the sequence is MIIICIGIITMISFFCYVGLF. Asn808 carries N-linked (GlcNAc...) asparagine glycosylation. A run of 2 helical transmembrane segments spans residues 841–861 and 862–882; these read VGDIIEIMSTVGFGFGIGLYF and SWKLSLCILAVFPIISFFMFI. Positions 1057-1296 constitute an ABC transporter 2 domain; that stretch reads IEFKNIHFRY…KGFYYTLAMQ (240 aa). 1092–1099 contacts ATP; that stretch reads GASGCGKS.

Belongs to the ABC transporter superfamily. ABCB family. Multidrug resistance exporter (TC 3.A.1.201) subfamily.

The protein localises to the membrane. The catalysed reaction is ATP + H2O + xenobioticSide 1 = ADP + phosphate + xenobioticSide 2.. Functionally, energy-dependent efflux pump responsible for decreased drug accumulation in multidrug resistance parasites. This Entamoeba histolytica (strain ATCC 30459 / HM-1:IMSS / ABRM) protein is Multidrug resistance protein 1.